A 345-amino-acid polypeptide reads, in one-letter code: tRNA pseudouridine synthase B (345 aa).

The tract at residues 1-33 is disordered; the sequence is MGGNSQPHQEPRRVNNDPRAKQQKGNQVRRDRR. A compositionally biased stretch (basic and acidic residues) spans 9–20; it reads QEPRRVNNDPRA. Asp-72 functions as the Nucleophile in the catalytic mechanism.

The protein belongs to the pseudouridine synthase TruB family. Type 1 subfamily.

The enzyme catalyses uridine(55) in tRNA = pseudouridine(55) in tRNA. Responsible for synthesis of pseudouridine from uracil-55 in the psi GC loop of transfer RNAs. This chain is tRNA pseudouridine synthase B, found in Bradyrhizobium diazoefficiens (strain JCM 10833 / BCRC 13528 / IAM 13628 / NBRC 14792 / USDA 110).